Reading from the N-terminus, the 514-residue chain is Cytochrome bd-II ubiquinol oxidase subunit 1 (514 aa).

Topologically, residues 1–22 are cytoplasmic; the sequence is MWDVIDLSRWQFALTALYHFLF. His-19 provides a ligand contact to heme. Residues 23-42 form a helical membrane-spanning segment; sequence VPLTLGLIFLLAIMETIYVV. Residues 43–94 are Periplasmic-facing; it reads TGKTIYRDMTRFWGKLFGINFALGVATGLTMEFQFGTNWSFYSNYVGDIFGA. The helical transmembrane segment at 95-114 threads the bilayer; the sequence is PLAMEALMAFFLESTFVGLF. Residues 115-129 are Cytoplasmic-facing; that stretch reads FFGWQRLNKYQHLLV. The helical transmembrane segment at 130 to 149 threads the bilayer; sequence TWLVAFGSNLSALWILNANG. The Periplasmic portion of the chain corresponds to 150 to 187; sequence WMQYPTGAHFDIDTLRMEMTSFSELVFNPVSQVKFVHT. His-186 serves as a coordination point for heme. Residues 188–207 traverse the membrane as a helical segment; the sequence is VMAGYVTGAMFIMAISAWYL. Residues 208 to 219 lie on the Cytoplasmic side of the membrane; sequence LRGRERNVALRS. The helical transmembrane segment at 220 to 239 threads the bilayer; sequence FAIGSVFGTLAIIGTLQLGD. Over 240–392 the chain is Periplasmic; that stretch reads SSAYEVAQVQ…VAPVFWSFRI (153 aa). Met-393 lines the heme pocket. Residues 393 to 412 form a helical membrane-spanning segment; that stretch reads MVGCGSLLLLVMLIALVQTL. Residues 413 to 470 are Cytoplasmic-facing; the sequence is RGKIDQHRWVLKMALWSLPLPWIAIEAGWFMTEFGRQPWAIQDILPTYSAHSALTTGQ. The helical transmembrane segment at 471–490 threads the bilayer; it reads LAFSLIMIVGLYTLFLIAEV. At 491-514 the chain is on the periplasmic side; sequence YLMQKYARLGPSAMQSEQPTQQQG.

The protein belongs to the cytochrome ubiquinol oxidase subunit 1 family. Heterodimer of subunits I and II. Heme is required as a cofactor. Post-translationally, the N-terminus is blocked.

The protein resides in the cell inner membrane. It catalyses the reaction 2 a ubiquinol + O2 + n H(+)(in) = 2 a ubiquinone + 2 H2O + n H(+)(out). Its pathway is energy metabolism; oxidative phosphorylation. With respect to regulation, inhibited by cyanide; is more sensitive to cyanide than cytochrome bd-I oxidase. In terms of biological role, a terminal oxidase that catalyzes quinol-dependent, Na(+)-independent oxygen uptake. Prefers menadiol over other quinols although ubiquinol was not tested. Generates a proton motive force using protons and electrons from opposite sides of the membrane to generate H(2)O, transferring 1 proton/electron. The protein is Cytochrome bd-II ubiquinol oxidase subunit 1 (appC) of Escherichia coli (strain K12).